Consider the following 994-residue polypeptide: Regulator of telomere elongation helicase 1 homolog (994 aa).

The Helicase ATP-binding domain maps to 7-316 (AGIPVHFPFE…DDLMLLKEML (310 aa)). 42–49 (SPTGTGKT) serves as a coordination point for ATP. [4Fe-4S] cluster-binding residues include C146, C164, C173, and C209. The DEAH box motif lies at 252–255 (DEAH). The disordered stretch occupies residues 861–887 (SSGLVKIHKRERSSPPGSSQSSSQTAK). Residues 874-884 (SPPGSSQSSSQ) show a composition bias toward low complexity.

This sequence belongs to the helicase family. RAD3/XPD subfamily.

Its subcellular location is the nucleus. It carries out the reaction ATP + H2O = ADP + phosphate + H(+). In terms of biological role, a probable ATP-dependent DNA helicase implicated in DNA repair and the maintenance of genomic stability. Acts as an anti-recombinase to counteract toxic recombination and limit crossover during meiosis. Regulates meiotic recombination and crossover homeostasis by physically dissociating strand invasion events and thereby promotes noncrossover repair by meiotic synthesis dependent strand annealing (SDSA) as well as disassembly of D loop recombination intermediates. The protein is Regulator of telomere elongation helicase 1 homolog of Drosophila ananassae (Fruit fly).